A 307-amino-acid chain; its full sequence is uncharacterized protein (307 aa).

This is an uncharacterized protein from Sinorhizobium fredii (strain NBRC 101917 / NGR234).